The following is a 429-amino-acid chain: Aspartate--tRNA(Asp/Asn) ligase (429 aa).

Glutamate 167 provides a ligand contact to L-aspartate. The segment at glutamine 189–lysine 192 is aspartate. Position 210 (arginine 210) interacts with L-aspartate. Residues arginine 210–glutamate 212 and glutamate 352 contribute to the ATP site. Mg(2+) is bound by residues glutamate 352 and serine 355. The L-aspartate site is built by serine 355 and arginine 359. Glycine 400 to arginine 403 is a binding site for ATP.

It belongs to the class-II aminoacyl-tRNA synthetase family. Type 2 subfamily. Homodimer. Mg(2+) serves as cofactor.

The protein localises to the cytoplasm. It catalyses the reaction tRNA(Asx) + L-aspartate + ATP = L-aspartyl-tRNA(Asx) + AMP + diphosphate. Aspartyl-tRNA synthetase with relaxed tRNA specificity since it is able to aspartylate not only its cognate tRNA(Asp) but also tRNA(Asn). Reaction proceeds in two steps: L-aspartate is first activated by ATP to form Asp-AMP and then transferred to the acceptor end of tRNA(Asp/Asn). The chain is Aspartate--tRNA(Asp/Asn) ligase from Sulfurisphaera tokodaii (strain DSM 16993 / JCM 10545 / NBRC 100140 / 7) (Sulfolobus tokodaii).